The following is an 899-amino-acid chain: Solute carrier family 12 member 9 (899 aa).

Residues 1 to 44 (MTSESSPLLHYRLFSVSDGGLGPPDSSPIMTDAVTVGTGPTQRK) lie on the Cytoplasmic side of the membrane. Residues 45–65 (LSTFFGVVVPTVLSMFSIVVF) form a helical membrane-spanning segment. Over 66–80 (MRIGFVVGHAGLLQS) the chain is Extracellular. A helical transmembrane segment spans residues 81-101 (LLMLFVAYVIIWLTVLSVCAI). Residues 102–127 (STNGAVQGGGAYFMISRTLGPEFGGS) lie on the Cytoplasmic side of the membrane. The helical transmembrane segment at 128–148 (IGLMFYLANVFACGVYVLGLV) threads the bilayer. The Extracellular portion of the chain corresponds to 149–176 (EAVLDVFGRDPSDVTDSLRSLPQGYGYS). A helical transmembrane segment spans residues 177–197 (FLYASIILLLCMAICLVGASI). Topologically, residues 198–202 (YSQAS) are cytoplasmic. The helical transmembrane segment at 203–223 (FFIFLLVFVVLLTILISFLAV) threads the bilayer. Topologically, residues 224-266 (RPLTVSIRHGGNVTMTGVYTGINSSTLHNNLQADYSLDYTTGN) are extracellular. Asn-235 and Asn-246 each carry an N-linked (GlcNAc...) asparagine glycan. A helical transmembrane segment spans residues 267–287 (LMNFATVFAVMFNGCTGIMAG). Topologically, residues 288–304 (CNLSGELKQPSRSIPMG) are cytoplasmic. The helical transmembrane segment at 305–325 (TIIAVIITFFVYLILFIFTAF) threads the bilayer. Over 326–347 (TCDRTLLREDYGFFRSINIWPP) the chain is Extracellular. A helical transmembrane segment spans residues 348-368 (FVLIGVYATSLSASMSTLIGA). The Cytoplasmic portion of the chain corresponds to 369 to 393 (SRILHALAKDDLFGVLLAPAKLVSK). Residues 394 to 414 (GGNPWGAVVYTWALVQLVLLA) form a helical membrane-spanning segment. Topologically, residues 415-419 (GKLNT) are extracellular. Residues 420–440 (IAGIVTVFYLIAYAAIDLACL) traverse the membrane as a helical segment. The Cytoplasmic portion of the chain corresponds to 441 to 469 (ALEWASAPNFRPTFRFFSWHTCLLGILSS). Residues 470–490 (LVMMFLINPAYASGSIVLLLL) traverse the membrane as a helical segment. Residues 491 to 739 (LLGSIHFRSS…PLDLLRPQAS (249 aa)) lie on the Extracellular side of the membrane. The chain crosses the membrane as a helical span at residues 740–760 (AYVDVCSLFLLQMACILNMAA). The Cytoplasmic portion of the chain corresponds to 761–899 (SWRRYQLRVF…GLTPVTCTEL (139 aa)).

The protein belongs to the SLC12A transporter family.

It is found in the cell membrane. It localises to the lysosome membrane. In terms of biological role, seems to correspond to a subunit of a multimeric transport system and thus, additional subunits may be required for its function. May play a role in lysosomal ion flux and osmoregulation. The polypeptide is Solute carrier family 12 member 9 (slc12a9) (Xenopus laevis (African clawed frog)).